The sequence spans 321 residues: Glucokinase (321 aa).

8-13 (GDVGGT) lines the ATP pocket.

Belongs to the bacterial glucokinase family.

It localises to the cytoplasm. It catalyses the reaction D-glucose + ATP = D-glucose 6-phosphate + ADP + H(+). The chain is Glucokinase from Klebsiella pneumoniae subsp. pneumoniae (strain ATCC 700721 / MGH 78578).